A 597-amino-acid chain; its full sequence is Large ribosomal subunit assembly factor BipA (597 aa).

The tr-type G domain maps to 3-198 (LPIRNVAIIA…AILHHVPPPA (196 aa)). GTP is bound by residues 15–20 (DHGKTT) and 128–131 (NKID).

Belongs to the TRAFAC class translation factor GTPase superfamily. Classic translation factor GTPase family. BipA subfamily. Monomer.

It is found in the cytoplasm. It catalyses the reaction GTP + H2O = GDP + phosphate + H(+). In terms of biological role, a 50S ribosomal subunit assembly protein with GTPase activity, required for 50S subunit assembly at low temperatures, may also play a role in translation. Binds GTP and analogs. Binds the 70S ribosome between the 30S and 50S subunits, in a similar position as ribosome-bound EF-G; it contacts a number of ribosomal proteins, both rRNAs and the A-site tRNA. The protein is Large ribosomal subunit assembly factor BipA of Synechocystis sp. (strain ATCC 27184 / PCC 6803 / Kazusa).